The following is a 145-amino-acid chain: D-aminoacyl-tRNA deacylase (145 aa).

Residues 137–138 carry the Gly-cisPro motif, important for rejection of L-amino acids motif; the sequence is GP.

This sequence belongs to the DTD family. In terms of assembly, homodimer.

It localises to the cytoplasm. The catalysed reaction is glycyl-tRNA(Ala) + H2O = tRNA(Ala) + glycine + H(+). It carries out the reaction a D-aminoacyl-tRNA + H2O = a tRNA + a D-alpha-amino acid + H(+). An aminoacyl-tRNA editing enzyme that deacylates mischarged D-aminoacyl-tRNAs. Also deacylates mischarged glycyl-tRNA(Ala), protecting cells against glycine mischarging by AlaRS. Acts via tRNA-based rather than protein-based catalysis; rejects L-amino acids rather than detecting D-amino acids in the active site. By recycling D-aminoacyl-tRNA to D-amino acids and free tRNA molecules, this enzyme counteracts the toxicity associated with the formation of D-aminoacyl-tRNA entities in vivo and helps enforce protein L-homochirality. The chain is D-aminoacyl-tRNA deacylase from Francisella tularensis subsp. holarctica (strain FTNF002-00 / FTA).